Consider the following 170-residue polypeptide: uncharacterized protein (170 aa).

The Ferritin-like diiron domain occupies 1-148 (MVKSQKVIDV…TIHDFFENAT (148 aa)).

This is an uncharacterized protein from Ureaplasma parvum serovar 3 (strain ATCC 700970).